The sequence spans 145 residues: Protein SprT-like (145 aa).

Residues 5 to 140 enclose the SprT-like domain; the sequence is DYVREVSLAD…ACGRCHGRLI (136 aa). Histidine 64 contacts Zn(2+). Residue glutamate 65 is part of the active site. Histidine 68 contributes to the Zn(2+) binding site.

The protein belongs to the SprT family. Zn(2+) serves as cofactor.

The protein localises to the cytoplasm. This is Protein SprT-like from Streptococcus equi subsp. zooepidemicus (strain MGCS10565).